The following is a 211-amino-acid chain: Outer-membrane lipoprotein carrier protein (211 aa).

The N-terminal stretch at 1 to 24 (MNTIKILIGLLGIFLFSLSGIVSA) is a signal peptide.

Belongs to the LolA family. Monomer.

The protein localises to the periplasm. Participates in the translocation of lipoproteins from the inner membrane to the outer membrane. Only forms a complex with a lipoprotein if the residue after the N-terminal Cys is not an aspartate (The Asp acts as a targeting signal to indicate that the lipoprotein should stay in the inner membrane). In Coxiella burnetii (strain CbuK_Q154) (Coxiella burnetii (strain Q154)), this protein is Outer-membrane lipoprotein carrier protein.